Consider the following 487-residue polypeptide: N-succinylglutamate 5-semialdehyde dehydrogenase (487 aa).

221–226 contributes to the NAD(+) binding site; sequence GSSRTG. Residues Glu244 and Cys278 contribute to the active site.

This sequence belongs to the aldehyde dehydrogenase family. AstD subfamily.

The enzyme catalyses N-succinyl-L-glutamate 5-semialdehyde + NAD(+) + H2O = N-succinyl-L-glutamate + NADH + 2 H(+). It functions in the pathway amino-acid degradation; L-arginine degradation via AST pathway; L-glutamate and succinate from L-arginine: step 4/5. Catalyzes the NAD-dependent reduction of succinylglutamate semialdehyde into succinylglutamate. This chain is N-succinylglutamate 5-semialdehyde dehydrogenase, found in Pseudomonas putida (strain ATCC 47054 / DSM 6125 / CFBP 8728 / NCIMB 11950 / KT2440).